The chain runs to 118 residues: Large ribosomal subunit protein uL18 (118 aa).

This sequence belongs to the universal ribosomal protein uL18 family. As to quaternary structure, part of the 50S ribosomal subunit; part of the 5S rRNA/L5/L18/L25 subcomplex. Contacts the 5S and 23S rRNAs.

This is one of the proteins that bind and probably mediate the attachment of the 5S RNA into the large ribosomal subunit, where it forms part of the central protuberance. The protein is Large ribosomal subunit protein uL18 of Campylobacter jejuni subsp. jejuni serotype O:6 (strain 81116 / NCTC 11828).